Consider the following 409-residue polypeptide: Ligand-gated cation channel ZACN (409 aa).

An N-terminal signal peptide occupies residues 1–18; that stretch reads MAPRLLLLLLAFLRLGTT. The Extracellular segment spans residues 19–233; it reads GPLVQGRGFR…LRLQNTALKA (215 aa). N-linked (GlcNAc...) asparagine glycosylation is found at Asn55 and Asn99. Cys157 and Cys171 are oxidised to a cystine. The chain crosses the membrane as a helical span at residues 234–254; that stretch reads IIALLVPGEALLLADMCGGLL. Over 255–265 the chain is Cytoplasmic; the sequence is PLRATERIAYK. Residues 266–286 traverse the membrane as a helical segment; that stretch reads VTLLLGYLVFHSSLVQALPSS. The Extracellular segment spans residues 287-296; the sequence is SSCNPLLIYY. The chain crosses the membrane as a helical span at residues 297-317; it reads FTVLLLLLFISTMETVLLAAL. Residues 318–365 lie on the Cytoplasmic side of the membrane; it reads QARGHLSARSSPIPTPRGEQQDHGDLGPHPEEAPGVKESRSWAEAADH. Positions 325–354 are disordered; the sequence is ARSSPIPTPRGEQQDHGDLGPHPEEAPGVK. A compositionally biased stretch (basic and acidic residues) spans 336 to 354; it reads EQQDHGDLGPHPEEAPGVK. A helical membrane pass occupies residues 366 to 386; it reads IFFLVYVVGVVCSQFFFIGFW. Residues 387–409 lie on the Extracellular side of the membrane; it reads MWATCKSDPAPGEAIPHGGQPRL.

Belongs to the ligand-gated ion channel (TC 1.A.9) family. Post-translationally, glycosylated.

It localises to the cell membrane. It carries out the reaction Na(+)(in) = Na(+)(out). The catalysed reaction is K(+)(in) = K(+)(out). Functionally, ligand-gated cation channel that allows the movement of sodium and potassium monoatomic cations across cell membranes when activated by zinc (Zn2+), copper (Cu2+), and changes in pH. Could also transport cesium. This is Ligand-gated cation channel ZACN from Canis lupus familiaris (Dog).